The sequence spans 224 residues: Cytidylate kinase (224 aa).

Residue 14-22 participates in ATP binding; that stretch reads GPAGSGKST.

This sequence belongs to the cytidylate kinase family. Type 1 subfamily.

Its subcellular location is the cytoplasm. The catalysed reaction is CMP + ATP = CDP + ADP. It catalyses the reaction dCMP + ATP = dCDP + ADP. The sequence is that of Cytidylate kinase from Mycoplasmoides gallisepticum (strain R(low / passage 15 / clone 2)) (Mycoplasma gallisepticum).